Reading from the N-terminus, the 205-residue chain is Guanylate kinase (205 aa).

The Guanylate kinase-like domain occupies 3–183; that stretch reads GFVLLISGPS…SYEALRAILI (181 aa). 10-17 is a binding site for ATP; that stretch reads GPSGAGKS.

Belongs to the guanylate kinase family.

It localises to the cytoplasm. It catalyses the reaction GMP + ATP = GDP + ADP. In terms of biological role, essential for recycling GMP and indirectly, cGMP. In Campylobacter jejuni (strain RM1221), this protein is Guanylate kinase.